We begin with the raw amino-acid sequence, 29 residues long: Ranatuerin-2SEa (29 aa).

A disulfide bond links Cys-23 and Cys-29.

Expressed by the skin glands.

The protein resides in the secreted. In terms of biological role, mast cell degranulating peptide. Causes histamine release from rat peritoneal mast cells in vitro. Has antibacterial activity against the Gram-negative bacterium E.coli K12 and Gram-positive bacterium M.luteus NCT C2665. This Lithobates sevosus (Dusky gopher frog) protein is Ranatuerin-2SEa.